Consider the following 355-residue polypeptide: MSGISAQLVKKLRDLTDAGMMDCKKALVEVAGDLQKAIDFLREKGLSKAAKKADRIAAEGVVALEVAPDFKSAMMVEINSETDFVAKNEGFKELVKKTLETIKAHNIHTPEELLKSPLDNKPFEEYLHSQIAVIGENILVRKIAHLKAPSSHIINGYAHSNARVGVLIGIKYNNEKNAPKVVELARNIAMHAAAMKPQVLDCKDFSLDFVKKETLALIAEIEKDNEEAKRLGKPLKNIPTFGSRIELSDEVLAHQKKAFENELKEQGKPEKIWDKIVPGKMERFIADNTLIDQRLTLLGQFYVMDDKKTIAQVVADCSKEWDDDLKITEYVRFELGEGIEKKAENFAEEVALQMK.

The tract at residues 82-85 (TDFV) is involved in Mg(2+) ion dislocation from EF-Tu.

Belongs to the EF-Ts family.

The protein localises to the cytoplasm. Functionally, associates with the EF-Tu.GDP complex and induces the exchange of GDP to GTP. It remains bound to the aminoacyl-tRNA.EF-Tu.GTP complex up to the GTP hydrolysis stage on the ribosome. This chain is Elongation factor Ts, found in Helicobacter pylori (strain P12).